Reading from the N-terminus, the 431-residue chain is Enolase (431 aa).

Residue Gln-167 participates in (2R)-2-phosphoglycerate binding. Residue Glu-209 is the Proton donor of the active site. Residues Asp-246, Glu-290, and Asp-317 each coordinate Mg(2+). (2R)-2-phosphoglycerate contacts are provided by Lys-342, Arg-371, Ser-372, and Lys-393. The active-site Proton acceptor is Lys-342.

It belongs to the enolase family. As to quaternary structure, component of the RNA degradosome, a multiprotein complex involved in RNA processing and mRNA degradation. Mg(2+) is required as a cofactor.

The protein localises to the cytoplasm. The protein resides in the secreted. It localises to the cell surface. The catalysed reaction is (2R)-2-phosphoglycerate = phosphoenolpyruvate + H2O. Its pathway is carbohydrate degradation; glycolysis; pyruvate from D-glyceraldehyde 3-phosphate: step 4/5. Functionally, catalyzes the reversible conversion of 2-phosphoglycerate (2-PG) into phosphoenolpyruvate (PEP). It is essential for the degradation of carbohydrates via glycolysis. The chain is Enolase from Pectobacterium atrosepticum (strain SCRI 1043 / ATCC BAA-672) (Erwinia carotovora subsp. atroseptica).